Reading from the N-terminus, the 397-residue chain is P2X purinoceptor 3 (397 aa).

At 1-20 the chain is on the cytoplasmic side; it reads MNCISDFFTYETTKSVVVKS. A helical membrane pass occupies residues 21 to 43; the sequence is WTIGIINRAVQLLIISYFVGWVF. Residues 44-322 lie on the Extracellular side of the membrane; it reads LHEKAYQVRD…AGKFNIIPTI (279 aa). 2 residues coordinate ATP: lysine 63 and lysine 65. 3 disulfides stabilise this stretch: cysteine 107-cysteine 153, cysteine 116-cysteine 137, and cysteine 122-cysteine 147. Mg(2+) is bound at residue glutamate 111. A glycan (N-linked (GlcNAc...) asparagine) is linked at asparagine 139. A Mg(2+)-binding site is contributed by aspartate 158. Ca(2+) is bound at residue aspartate 158. Asparagine 170 carries an N-linked (GlcNAc...) asparagine glycan. Threonine 172 contacts ATP. Asparagine 194 carries an N-linked (GlcNAc...) asparagine glycan. Disulfide bonds link cysteine 203/cysteine 213 and cysteine 247/cysteine 256. ATP-binding residues include serine 275, asparagine 279, and arginine 281. Asparagine 290 carries N-linked (GlcNAc...) asparagine glycosylation. Lysine 299 is a binding site for ATP. The helical transmembrane segment at 323–341 threads the bilayer; sequence ISSVAAFTSVGVGTVLCDI. The Cytoplasmic segment spans residues 342–397; it reads ILLNFLKGADHYKARKFEEVTETTLKGTASTNPVFASDQATVEKQSTDSGAYSIGH.

This sequence belongs to the P2X receptor family. In terms of assembly, homotrimer. Forms heterotrimer with P2RX2. Heterotrimeric P2RX2/3 has a ligand dose-response profile that is distinct from either homotrimeric P2RX2 or P2RX3. As to expression, selectively expressed in sensory ganglia.

It localises to the cell membrane. It carries out the reaction Ca(2+)(in) = Ca(2+)(out). It catalyses the reaction Na(+)(in) = Na(+)(out). Its activity is regulated as follows. Has high sensitivity to ATP. Fast activation by external ATP. Exhibits rapid desensitization. Sensitives to the ATP agonist:alpha/beta-methylene-ATP. Subject to allosteric inhibition by AF-219. Mg(2+) and Ca(2+) slow deactivation of P2RX3. In terms of biological role, extracellular ATP-activated non-selective cation channel. Plays particularly important role in sensory neurons where its activation is critical for gustatory, nociceptive responses, visceral reflexes and sensory hypersensitization. The chain is P2X purinoceptor 3 (P2rx3) from Rattus norvegicus (Rat).